A 341-amino-acid polypeptide reads, in one-letter code: MNTLLLLHPTIVTEPQAVEAAKDSLAQKLGTDKSNISQHIIDRVATGQVSLRPSYYNHIQYLAPPEANVKKLPVKCYEIIFEALQSNGVFEGTIPPESATDGILQGFLVESDTKWVKPSTLGSVVSLKRPAGQNKTKSSAFKKEMPFFKKLSSPPTLTDSSEADEDEESQLNEKLKGSKLIYFDESSDDEIIDEDELLRDDDGALKGPVVVPVKCALPNGKRRKKACKDCTCGLKELEENEQNERLDAQASILSKLATSANAEAEKIEERLRRKQASKEGEEVKFTEQEVTEIDFTIQGKTGGCGSCALGDAFRCDGCPYLGLPPFKPGQAISIEGLGADI.

The tract at residues 1–157 (MNTLLLLHPT…FKKLSSPPTL (157 aa)) is N-terminal SAM-like domain. The disordered stretch occupies residues 151–171 (LSSPPTLTDSSEADEDEESQL). Residues 157-204 (LTDSSEADEDEESQLNEKLKGSKLIYFDESSDDEIIDEDELLRDDDGA) form a linker region. The segment covering 161–170 (SEADEDEESQ) has biased composition (acidic residues). [2Fe-2S] cluster is bound by residues C215, C227, C230, and C232. Positions 215–232 (CALPNGKRRKKACKDCTC) are fe-S binding site A. C304, C307, C315, and C318 together coordinate [4Fe-4S] cluster. 2 short sequence motifs (cx2C motif) span residues 304-307 (CGSC) and 315-318 (CDGC). Residues 304–318 (CGSCALGDAFRCDGC) are fe-S binding site B.

Belongs to the anamorsin family. As to quaternary structure, monomer. Interacts with TAH18. Interacts with MIA40. Requires [2Fe-2S] cluster as cofactor. The cofactor is [4Fe-4S] cluster.

The protein resides in the cytoplasm. It localises to the mitochondrion intermembrane space. Functionally, component of the cytosolic iron-sulfur (Fe-S) protein assembly (CIA) machinery required for the maturation of extramitochondrial Fe-S proteins. Part of an electron transfer chain functioning in an early step of cytosolic Fe-S biogenesis, facilitating the de novo assembly of a [4Fe-4S] cluster on the scaffold complex CFD1-NBP35. Electrons are transferred to DRE2 from NADPH via the FAD- and FMN-containing protein TAH18. TAH18-DRE2 are also required for the assembly of the diferric tyrosyl radical cofactor of ribonucleotide reductase (RNR), probably by providing electrons for reduction during radical cofactor maturation in the catalytic small subunit RNR2. This is Fe-S cluster assembly protein DRE2 from Komagataella phaffii (strain GS115 / ATCC 20864) (Yeast).